The chain runs to 177 residues: Large ribosomal subunit protein uL6 (177 aa).

The protein belongs to the universal ribosomal protein uL6 family. In terms of assembly, part of the 50S ribosomal subunit.

This protein binds to the 23S rRNA, and is important in its secondary structure. It is located near the subunit interface in the base of the L7/L12 stalk, and near the tRNA binding site of the peptidyltransferase center. This Histophilus somni (strain 129Pt) (Haemophilus somnus) protein is Large ribosomal subunit protein uL6.